Reading from the N-terminus, the 362-residue chain is Cobalt-precorrin-5B C(1)-methyltransferase (362 aa).

This sequence belongs to the CbiD family.

The catalysed reaction is Co-precorrin-5B + S-adenosyl-L-methionine = Co-precorrin-6A + S-adenosyl-L-homocysteine. The protein operates within cofactor biosynthesis; adenosylcobalamin biosynthesis; cob(II)yrinate a,c-diamide from sirohydrochlorin (anaerobic route): step 6/10. In terms of biological role, catalyzes the methylation of C-1 in cobalt-precorrin-5B to form cobalt-precorrin-6A. This Burkholderia cenocepacia (strain HI2424) protein is Cobalt-precorrin-5B C(1)-methyltransferase.